We begin with the raw amino-acid sequence, 513 residues long: Cytochrome P450 monooxygenase asaD (513 aa).

A helical membrane pass occupies residues 14–34; the sequence is ILYPFLFGIFAVASLCIATLL. 4 N-linked (GlcNAc...) asparagine glycosylation sites follow: N258, N370, N431, and N441. Residue C461 participates in heme binding.

This sequence belongs to the cytochrome P450 family. It depends on heme as a cofactor.

The protein resides in the membrane. Its pathway is secondary metabolite biosynthesis. Cytochrome P450 monooxygenase; part of the gene cluster that mediates the biosynthesis of aspergillic acid, a hydroxamic acid-containing pyrazinone with aliphatic side chains that originates from leucine (Leu) and isoleucine (Ile). Aspergillic acid has antibiotic properties and was shown to be lethal to mice. The first step in the pathway is the production of deoxyaspergillic acid via a condensation between the Ile amine and the Leu carboxylic acid, followed by a reductive release from the protein forming the dipeptide aldehyde NH(2)-Leu-Ile-CHO, which could undergo an intermolecular cyclization resulting in a dihydropyrazinone. As the NRPS asaC lacks a condensation domain, it is improbable that it is responsible for condensation of Leu and Ile. One possibility is that asaC acts on a previously condensed dipeptide and functions as a Leu-Ile reductase to yield deoxyaspergillic acid. After asaC forms deoxyaspergillic acid, the cytochrome P450 asaD oxidizes the pyrazinone to the hydroxamic acid-containing bioactive metabolite aspergillic acid. The hydroxylase/desaturase asaB can then convert aspergillic acid to hydroxyaspergillic acid. Both aspergillic acid and hydroxyaspergillic acid can form complexes with iron producing ferriaspergillin analogs. The protein is Cytochrome P450 monooxygenase asaD of Aspergillus flavus (strain ATCC 200026 / FGSC A1120 / IAM 13836 / NRRL 3357 / JCM 12722 / SRRC 167).